We begin with the raw amino-acid sequence, 540 residues long: RNA exonuclease 3 (540 aa).

The C3H1-type zinc-finger motif lies at 7–34 (QFKHIVCPFLRTGRKCQSRNCFFSHDFQ). The 148-residue stretch at 382–529 (HCALDCELCY…EDAVSALQLV (148 aa)) folds into the Exonuclease domain.

It belongs to the REXO1/REXO3 family.

It localises to the cytoplasm. Its subcellular location is the nucleus. In terms of biological role, 3' to 5' exoribonuclease required for proper 3' end maturation of MRP RNA and of the U5L snRNA. The chain is RNA exonuclease 3 (rex3) from Schizosaccharomyces pombe (strain 972 / ATCC 24843) (Fission yeast).